Consider the following 555-residue polypeptide: Natural resistance-associated macrophage protein 1 (555 aa).

The Cytoplasmic portion of the chain corresponds to 1-63 (MSGSGPAMAS…STPGFSFRKL (63 aa)). The chain crosses the membrane as a helical span at residues 64-81 (WAFTGPGFLMSIAYLDPG). Topologically, residues 82-90 (NVESDLQCG) are extracellular. A helical membrane pass occupies residues 91 to 110 (AVAGFKLLWVLLWATVLGLL). Residues 111 to 147 (CQRLAIRLGVVTGKDLAEICYLYYPRVPRVLLWLMME) lie on the Cytoplasmic side of the membrane. The chain crosses the membrane as a helical span at residues 148 to 168 (IAIIGSDMQEVIGTAIAFSLL). Over 169 to 172 (SAGR) the chain is Extracellular. A helical membrane pass occupies residues 173–192 (IPLWGGVLITITDTLFFLFL). Residues 193–201 (DKYGLRKLE) are Cytoplasmic-facing. Residues 202 to 222 (AFFGFLITIMALTFGYEYVMV) traverse the membrane as a helical segment. Over 223–245 (RPAQTEVLKGIFLPYCPGCGREE) the chain is Extracellular. Residues 246 to 264 (LLQAVGIVGAIIMPHNIFL) form a helical membrane-spanning segment. The Cytoplasmic segment spans residues 265 to 292 (HSSLVKTRAIDRSKKEEVKEANMYFLTE). A helical transmembrane segment spans residues 293-312 (SCLALFVSFLINLFVMAVFG). Residues 313–354 (EAFYHQRNEDVHNKCVNSSVSRYASIFPINNETVSVDIYQGG) lie on the Extracellular side of the membrane. N-linked (GlcNAc...) asparagine glycosylation is found at Asn329 and Asn343. Residues 355 to 374 (VILGCYFGAAALYIWAVGIL) traverse the membrane as a helical segment. Residues 375–405 (AAGQSSTMTGTYAGQFVMEGFLQLRWSRFTR) lie on the Cytoplasmic side of the membrane. The helical transmembrane segment at 406–423 (VLFTRSLAILPTLFVAAF) threads the bilayer. At 424 to 434 (RDVSQLTGMND) the chain is on the extracellular side. A helical transmembrane segment spans residues 435–455 (LLNVLQSILLPFAVLPVLTFT). Over 456 to 471 (SLRPLMHDFANGLLGQ) the chain is Cytoplasmic. The chain crosses the membrane as a helical span at residues 472 to 493 (VLMSLITGLVCAINVYFVVDFL). Over 494–501 (PTLRGLGY) the chain is Extracellular. The chain crosses the membrane as a helical span at residues 502 to 521 (LIPLGLLLVAYVAFVTYLLW). Topologically, residues 522-555 (TCSIAHGARFLARGRYNRFSFDVTADVPGLAGPH) are cytoplasmic.

This sequence belongs to the NRAMP family. In terms of tissue distribution, macrophages; spleen and thymus and at lower level in liver and lung.

The protein resides in the late endosome membrane. It localises to the lysosome membrane. It catalyses the reaction Zn(2+)(in) + H(+)(out) = Zn(2+)(out) + H(+)(in). It carries out the reaction Fe(2+)(in) + H(+)(out) = Fe(2+)(out) + H(+)(in). The enzyme catalyses Mn(2+)(in) + H(+)(out) = Mn(2+)(out) + H(+)(in). Its function is as follows. Macrophage-specific antiporter that fluxes metal ions in either direction against a proton gradient. Localized to late endosomal lysosomal membranes, delivers bivalent cations from the cytosol into these acidic compartments where they may directly affect antimicrobial activity. Involved in iron metabolism and host natural resistance to infection with intracellular parasites. Pathogen resistance involves sequestration of Fe(2+) and Mn(2+), cofactors of both prokaryotic and eukaryotic catalases and superoxide dismutases, not only to protect the macrophage against its own generation of reactive oxygen species, but to deny the cations to the pathogen for synthesis of its protective enzymes. The sequence is that of Natural resistance-associated macrophage protein 1 (SLC11A1) from Gallus gallus (Chicken).